We begin with the raw amino-acid sequence, 435 residues long: AP-2 complex subunit mu (435 aa).

The 265-residue stretch at 170 to 434 (RNELFLDVLE…IGRSGIYETR (265 aa)) folds into the MHD domain. A 1,2-diacyl-sn-glycero-3-phospho-(1D-myo-inositol-3,4,5-trisphosphate) contacts are provided by Lys-341, Lys-345, and Lys-354.

The protein belongs to the adaptor complexes medium subunit family. In terms of assembly, adaptor protein complex 2 (AP-2) is a heterotetramer composed of two large adaptins (alpha-type subunit and beta-type subunit), a medium adaptin (mu-type subunit) and a small adaptin (sigma-type subunit).

The protein localises to the cell membrane. Its subcellular location is the membrane. The protein resides in the coated pit. Its function is as follows. Component of the adaptor complexes which link clathrin to receptors in coated vesicles. Clathrin-associated protein complexes are believed to interact with the cytoplasmic tails of membrane proteins, leading to their selection and concentration. AP50 is a subunit of the plasma membrane adaptor. The complex binds polyphosphoinositide-containing lipids. In Xenopus laevis (African clawed frog), this protein is AP-2 complex subunit mu (ap2m1).